The primary structure comprises 363 residues: Early boundary activity protein 1 (363 aa).

Over residues 155-168 (MDQEPEHKQSHEQD) the composition is skewed to basic and acidic residues. A disordered region spans residues 155–242 (MDQEPEHKQS…NAKRRCPGFE (88 aa)). Positions 198–209 (EDLGLDDDDEDY) are enriched in acidic residues. The 100-residue stretch at 255–354 (GPNGTEVSRI…TKCADENKML (100 aa)) folds into the BEN domain.

The heterotrimeric Elba complex consists of Elba1, Elba2 and Elba3.

It is found in the nucleus. The heterotrimeric Elba complex is required for chromatin domain boundary function during early embryogenesis. It binds to a 8-bp sequence 5'-CCAATAAG-3' in the Fab-7 insulator or boundary element in the bithorax complex and contributes to its insulator or boundary activity. Elba1 may act as a transcriptional repressor and binds the palindromic sequence 5'-CCAATTGG-3' to mediate transcriptional repression. This is Early boundary activity protein 1 from Drosophila melanogaster (Fruit fly).